An 88-amino-acid polypeptide reads, in one-letter code: MGFTDETVRFNLNDGDKNEISNTLTNVYRSLAEKGYNPINQIVGYVLSGDPAYVPRYNDARNQIRKYERDEIVEELVRYYLKGNGTDL.

It belongs to the UPF0297 family.

The polypeptide is UPF0297 protein STER_1937 (Streptococcus thermophilus (strain ATCC BAA-491 / LMD-9)).